A 56-amino-acid polypeptide reads, in one-letter code: MAHENVWFSHPRKYGKGSRQCAHTGRRLGLIRKYGLNISRQSFREYANDIGFVKYR.

The protein belongs to the universal ribosomal protein uS14 family. In terms of assembly, component of the small ribosomal subunit (SSU). Mature yeast ribosomes consist of a small (40S) and a large (60S) subunit. The 40S small subunit contains 1 molecule of ribosomal RNA (18S rRNA) and at least 33 different proteins. The large 60S subunit contains 3 rRNA molecules (25S, 5.8S and 5S rRNA) and at least 46 different proteins.

It localises to the cytoplasm. The protein resides in the nucleus. Component of the ribosome, a large ribonucleoprotein complex responsible for the synthesis of proteins in the cell. The small ribosomal subunit (SSU) binds messenger RNAs (mRNAs) and translates the encoded message by selecting cognate aminoacyl-transfer RNA (tRNA) molecules. The large subunit (LSU) contains the ribosomal catalytic site termed the peptidyl transferase center (PTC), which catalyzes the formation of peptide bonds, thereby polymerizing the amino acids delivered by tRNAs into a polypeptide chain. The nascent polypeptides leave the ribosome through a tunnel in the LSU and interact with protein factors that function in enzymatic processing, targeting, and the membrane insertion of nascent chains at the exit of the ribosomal tunnel. This chain is Small ribosomal subunit protein uS14 (rps29), found in Schizosaccharomyces pombe (strain 972 / ATCC 24843) (Fission yeast).